The following is a 455-amino-acid chain: Indoleacetamide hydrolase (455 aa).

Active-site charge relay system residues include Lys-71 and Ser-146. The active-site Acyl-ester intermediate is Ser-170.

It belongs to the amidase family.

It functions in the pathway plant hormone metabolism; auxin biosynthesis. In terms of biological role, hydrolyzes indole-3-acetamide (IAM) into indole-3-acetic acid (IAA). This is Indoleacetamide hydrolase (iaaH) from Pseudomonas savastanoi (Pseudomonas syringae pv. savastanoi).